The chain runs to 468 residues: Bifunctional protein GlmU (468 aa).

The pyrophosphorylase stretch occupies residues 1 to 233 (MAQAGSASPL…LEEANLVNDR (233 aa)). UDP-N-acetyl-alpha-D-glucosamine-binding positions include 15 to 18 (LAAG), K29, Q79, and 84 to 85 (GT). A Mg(2+)-binding site is contributed by D109. The UDP-N-acetyl-alpha-D-glucosamine site is built by G146, E159, N174, and N231. N231 provides a ligand contact to Mg(2+). The segment at 234-254 (SQLARAEEILRRRILDAHMKE) is linker. Residues 255–468 (GVTVRDPVST…GDRRRARTEG (214 aa)) are N-acetyltransferase. Positions 336 and 354 each coordinate UDP-N-acetyl-alpha-D-glucosamine. The Proton acceptor role is filled by H366. Residues Y369 and N380 each contribute to the UDP-N-acetyl-alpha-D-glucosamine site. Acetyl-CoA-binding positions include A383, 389 to 390 (NY), and A426.

In the N-terminal section; belongs to the N-acetylglucosamine-1-phosphate uridyltransferase family. This sequence in the C-terminal section; belongs to the transferase hexapeptide repeat family. Homotrimer. The cofactor is Mg(2+).

It localises to the cytoplasm. It carries out the reaction alpha-D-glucosamine 1-phosphate + acetyl-CoA = N-acetyl-alpha-D-glucosamine 1-phosphate + CoA + H(+). It catalyses the reaction N-acetyl-alpha-D-glucosamine 1-phosphate + UTP + H(+) = UDP-N-acetyl-alpha-D-glucosamine + diphosphate. It functions in the pathway nucleotide-sugar biosynthesis; UDP-N-acetyl-alpha-D-glucosamine biosynthesis; N-acetyl-alpha-D-glucosamine 1-phosphate from alpha-D-glucosamine 6-phosphate (route II): step 2/2. It participates in nucleotide-sugar biosynthesis; UDP-N-acetyl-alpha-D-glucosamine biosynthesis; UDP-N-acetyl-alpha-D-glucosamine from N-acetyl-alpha-D-glucosamine 1-phosphate: step 1/1. Its pathway is bacterial outer membrane biogenesis; LPS lipid A biosynthesis. In terms of biological role, catalyzes the last two sequential reactions in the de novo biosynthetic pathway for UDP-N-acetylglucosamine (UDP-GlcNAc). The C-terminal domain catalyzes the transfer of acetyl group from acetyl coenzyme A to glucosamine-1-phosphate (GlcN-1-P) to produce N-acetylglucosamine-1-phosphate (GlcNAc-1-P), which is converted into UDP-GlcNAc by the transfer of uridine 5-monophosphate (from uridine 5-triphosphate), a reaction catalyzed by the N-terminal domain. This is Bifunctional protein GlmU from Rubrobacter xylanophilus (strain DSM 9941 / JCM 11954 / NBRC 16129 / PRD-1).